The primary structure comprises 278 residues: Elongation factor Ts 2, mitochondrial (278 aa).

Belongs to the EF-Ts family.

It localises to the mitochondrion. Functionally, associates with the EF-Tu.GDP complex and induces the exchange of GDP to GTP. It remains bound to the aminoacyl-tRNA.EF-Tu.GTP complex up to the GTP hydrolysis stage on the ribosome. This chain is Elongation factor Ts 2, mitochondrial, found in Trypanosoma cruzi (strain CL Brener).